The chain runs to 1064 residues: Probable ATP-dependent DNA helicase CHR23 (1064 aa).

Residues 398–563 (VSLYNNDYNG…WSLLNFLLPH (166 aa)) form the Helicase ATP-binding domain. 411-418 (DEMGLGKT) provides a ligand contact to ATP. The DEAH box signature appears at 513 to 516 (DEGH). The Helicase C-terminal domain occupies 699–866 (LLDRLLPKLK…DRREMLEEIM (168 aa)). Disordered regions lie at residues 924-955 (AYTSETQEDKTNAKNHFGSLTGKRKRKEAVYS) and 967-1064 (MESE…SKRN). A compositionally biased stretch (acidic residues) spans 1002–1014 (ESDEEKEEEEEER). Low complexity predominate over residues 1048–1064 (SSPNSRGKGSSKGSKRN).

The protein belongs to the helicase family. Expressed in embryos, root apical meristem (RAM) and shoot apical meristem (SAM).

It localises to the nucleus. The enzyme catalyses ATP + H2O = ADP + phosphate + H(+). In terms of biological role, probable chromatin-remodeling factor that is functionally redundant with CHR12 in root and shoot stem cell initiation and root apical meristem (RAM) and shoot apical meristem (SAM) maintenance. Can associate with the promoter region of WOX5. May promote seed maturation and repress initiation of germination. May repress plant growth. This chain is Probable ATP-dependent DNA helicase CHR23, found in Arabidopsis thaliana (Mouse-ear cress).